Reading from the N-terminus, the 467-residue chain is Glutamate--tRNA ligase (467 aa).

The short motif at 12–22 is the 'HIGH' region element; the sequence is PSPTGYLHIGG. Basic and acidic residues predominate over residues 114–128; sequence EQEAKKEKPRYDGRW. The tract at residues 114-140 is disordered; it reads EQEAKKEKPRYDGRWRPAPGKTLPTPP. The short motif at 244–248 is the 'KMSKS' region element; the sequence is KLSKR. Lysine 247 serves as a coordination point for ATP.

This sequence belongs to the class-I aminoacyl-tRNA synthetase family. Glutamate--tRNA ligase type 1 subfamily. In terms of assembly, monomer.

The protein localises to the cytoplasm. The catalysed reaction is tRNA(Glu) + L-glutamate + ATP = L-glutamyl-tRNA(Glu) + AMP + diphosphate. Its function is as follows. Catalyzes the attachment of glutamate to tRNA(Glu) in a two-step reaction: glutamate is first activated by ATP to form Glu-AMP and then transferred to the acceptor end of tRNA(Glu). The chain is Glutamate--tRNA ligase from Azoarcus sp. (strain BH72).